The primary structure comprises 347 residues: MSARAAPSRRRQAGRRLRYLPTGSFPFLLLLLLLCIQLGGGQKKKENLLAEKVEQLMEWSSRRSIFRMNGDKFRKFVKAPPRNYSMIVMFTALQPQRQCSVCRQANEEYQILANSWRYSSAFCNKLFFGMVDYDEGTDVFQQLNMNSAPTFMHFPSKGRPKRADTFDLQRIGFAAEQLAKWIADRTDVHIRVFRPPNYSGTIALALLVSLVGGLLYLRRNNLEFIYNKTGWAMVSLCIVFAMTSGQMWNHIRGPPYAHKNPHNGQVSYIHGSSQAQFVAESHIILVLNAAITMGMVLLNEAATSKGDVGKRRIICLVGLGLVVFFFSFLLSIFRSKYHGYPYSFLIK.

The signal sequence occupies residues 1–41 (MSARAAPSRRRQAGRRLRYLPTGSFPFLLLLLLLCIQLGGG). Topologically, residues 42-196 (QKKKENLLAE…DVHIRVFRPP (155 aa)) are lumenal. The 129-residue stretch at 59 to 187 (WSSRRSIFRM…LAKWIADRTD (129 aa)) folds into the Thioredoxin domain. A glycan (N-linked (GlcNAc...) asparagine) is linked at asparagine 83. Cysteine 99 and cysteine 102 are disulfide-bonded. Residues 197–217 (NYSGTIALALLVSLVGGLLYL) form a helical membrane-spanning segment. Residues 218 to 221 (RRNN) are Cytoplasmic-facing. The helical transmembrane segment at 222 to 242 (LEFIYNKTGWAMVSLCIVFAM) threads the bilayer. The Lumenal segment spans residues 243–276 (TSGQMWNHIRGPPYAHKNPHNGQVSYIHGSSQAQ). A helical transmembrane segment spans residues 277 to 297 (FVAESHIILVLNAAITMGMVL). Residues 298–312 (LNEAATSKGDVGKRR) are Cytoplasmic-facing. Residues 313 to 333 (IICLVGLGLVVFFFSFLLSIF) traverse the membrane as a helical segment. Topologically, residues 334-347 (RSKYHGYPYSFLIK) are lumenal.

Belongs to the OST3/OST6 family. As to quaternary structure, accessory component of the STT3B-containing form of the oligosaccharyltransferase (OST) complex. OST exists in two different complex forms which contain common core subunits RPN1, RPN2, OST48, OST4, DAD1 and TMEM258, either STT3A or STT3B as catalytic subunits, and form-specific accessory subunits. OST can form stable complexes with the Sec61 complex or with both the Sec61 and TRAP complexes. The association of TUSC3 or MAGT1 with the STT3B-containing complex seems to be mutually exclusvice.

It is found in the endoplasmic reticulum membrane. The protein operates within protein modification; protein glycosylation. Functionally, acts as accessory component of the N-oligosaccharyl transferase (OST) complex which catalyzes the transfer of a high mannose oligosaccharide from a lipid-linked oligosaccharide donor to an asparagine residue within an Asn-X-Ser/Thr consensus motif in nascent polypeptide chains. Involved in N-glycosylation of STT3B-dependent substrates. Specifically required for the glycosylation of a subset of acceptor sites that are near cysteine residues; in this function seems to act redundantly with MAGT1. In its oxidized form proposed to form transient mixed disulfides with a glycoprotein substrate to facilitate access of STT3B to the unmodified acceptor site. Also has oxidoreductase-independent functions in the STT3B-containing OST complex possibly involving substrate recognition. Could indirectly play a role in Mg(2+) transport. The sequence is that of Dolichyl-diphosphooligosaccharide--protein glycosyltransferase subunit TUSC3 (Tusc3) from Mus musculus (Mouse).